The chain runs to 211 residues: Probable septum site-determining protein MinC (211 aa).

This sequence belongs to the MinC family. Interacts with MinD and FtsZ.

Cell division inhibitor that blocks the formation of polar Z ring septums. Rapidly oscillates between the poles of the cell to destabilize FtsZ filaments that have formed before they mature into polar Z rings. Prevents FtsZ polymerization. This is Probable septum site-determining protein MinC from Clostridium acetobutylicum (strain ATCC 824 / DSM 792 / JCM 1419 / IAM 19013 / LMG 5710 / NBRC 13948 / NRRL B-527 / VKM B-1787 / 2291 / W).